Consider the following 499-residue polypeptide: BTB/POZ domain-containing protein 16 (499 aa).

Residues 143–199 (INDPLVTREAFATALKNLYMQEVKICLDDVLGVLAAAHILQFGSLFQRCVTVMMSGL) form the BTB domain.

In Bos taurus (Bovine), this protein is BTB/POZ domain-containing protein 16 (BTBD16).